The following is a 371-amino-acid chain: Zinc transporter ZIP13 (371 aa).

The Lumenal segment spans residues 1–7 (MPGCPCP). Residues 8–28 (GCGMAGPRLLFLTALALELLE) traverse the membrane as a helical segment. The Cytoplasmic portion of the chain corresponds to 29-68 (RAGGSQPALRSRGTATACRLDNKESESWGALLSGERLDTW). The chain crosses the membrane as a helical span at residues 69–89 (ICSLLGSLMVGLSGVFPLLVI). Residues 90-108 (PLEMGTMLRSEAGAWRLKQ) lie on the Lumenal side of the membrane. A helical transmembrane segment spans residues 109–129 (LLSFALGGLLGNVFLHLLPEA). At 130 to 149 (WAYTCSASPGGEGQSLQQQQ) the chain is on the cytoplasmic side. The helical transmembrane segment at 150–170 (QLGLWVIAGILTFLALEKMFL) threads the bilayer. The Lumenal segment spans residues 171 to 235 (DSKEEGTSQA…TIDNFTHGLA (65 aa)). A helical transmembrane segment spans residues 236 to 256 (VAASFLVSKKIGLLTTMAILL). The short motif at 257-262 (HEIPHE) is the XEXPHE-motif element. At 257-278 (HEIPHEVGDFAILLRAGFDRWS) the chain is on the cytoplasmic side. The helical transmembrane segment at 279-299 (AAKLQLSTALGGLLGAGFAIC) threads the bilayer. The Lumenal segment spans residues 300–316 (TQSPKGVVGCSPAAEET). A helical transmembrane segment spans residues 317-337 (AAWVLPFTSGGFLYIALVNVL). Over 338 to 349 (PDLLEEEDPWRS) the chain is Cytoplasmic. The helical transmembrane segment at 350–370 (LQQLLLLCAGIVVMVLFSLFV) threads the bilayer. Asp-371 is a topological domain (lumenal).

It belongs to the ZIP transporter (TC 2.A.5) family. Homodimer.

The protein localises to the golgi apparatus membrane. It is found in the cytoplasmic vesicle membrane. Its subcellular location is the endoplasmic reticulum membrane. It catalyses the reaction Zn(2+)(in) = Zn(2+)(out). In terms of biological role, functions as a zinc transporter transporting Zn(2+) from the Golgi apparatus to the cytosol and thus influences the zinc level at least in areas of the cytosol. May regulate beige adipocyte differentiation. This Homo sapiens (Human) protein is Zinc transporter ZIP13.